The sequence spans 346 residues: NADH-quinone oxidoreductase subunit H (346 aa).

The next 9 helical transmembrane spans lie at 13–33, 51–71, 83–103, 116–136, 162–182, 191–211, 244–264, 278–298, and 310–330; these read ILLILLQCLLLVVPLLVALAF, PNVVGAFGLLQSFADFLKYIV, AVYFLAPIVSLVMALIAWAVI, VAVLYVFAVSSLEVYGVIMGG, IGLIIIGVIISTGSMNFTAIV, LLNWYFLPHFPMLFLFFISAL, FMIGELVAVVLMCALTVLLFF, VFWMILKMLAVFFMFSMVKAI, and LGWKVFLPFSLFWVVFVAFMA.

It belongs to the complex I subunit 1 family. NDH-1 is composed of 14 different subunits. Subunits NuoA, H, J, K, L, M, N constitute the membrane sector of the complex.

It localises to the cell inner membrane. The catalysed reaction is a quinone + NADH + 5 H(+)(in) = a quinol + NAD(+) + 4 H(+)(out). Functionally, NDH-1 shuttles electrons from NADH, via FMN and iron-sulfur (Fe-S) centers, to quinones in the respiratory chain. The immediate electron acceptor for the enzyme in this species is believed to be ubiquinone. Couples the redox reaction to proton translocation (for every two electrons transferred, four hydrogen ions are translocated across the cytoplasmic membrane), and thus conserves the redox energy in a proton gradient. This subunit may bind ubiquinone. This Jannaschia sp. (strain CCS1) protein is NADH-quinone oxidoreductase subunit H.